Reading from the N-terminus, the 237-residue chain is Protein GrpE (237 aa).

Disordered regions lie at residues 27–51 (EDREAEASTSSGEASAEASQDLSET) and 202–237 (AVSSGSPTSEPSPSDPATPKPEPESTPASPQNPQHS). Composition is skewed to low complexity over residues 33-45 (ASTSSGEASAEAS) and 204-213 (SSGSPTSEPS). A compositionally biased stretch (polar residues) spans 227 to 237 (TPASPQNPQHS).

This sequence belongs to the GrpE family. As to quaternary structure, homodimer.

It localises to the cytoplasm. Functionally, participates actively in the response to hyperosmotic and heat shock by preventing the aggregation of stress-denatured proteins, in association with DnaK and GrpE. It is the nucleotide exchange factor for DnaK and may function as a thermosensor. Unfolded proteins bind initially to DnaJ; upon interaction with the DnaJ-bound protein, DnaK hydrolyzes its bound ATP, resulting in the formation of a stable complex. GrpE releases ADP from DnaK; ATP binding to DnaK triggers the release of the substrate protein, thus completing the reaction cycle. Several rounds of ATP-dependent interactions between DnaJ, DnaK and GrpE are required for fully efficient folding. This is Protein GrpE from Synechococcus sp. (strain JA-3-3Ab) (Cyanobacteria bacterium Yellowstone A-Prime).